The primary structure comprises 225 residues: UPF0758 protein Sama_0327 (225 aa).

Residues Val-102–Ile-224 form the MPN domain. 3 residues coordinate Zn(2+): His-173, His-175, and Asp-186. The JAMM motif motif lies at His-173–Asp-186.

It belongs to the UPF0758 family.

The polypeptide is UPF0758 protein Sama_0327 (Shewanella amazonensis (strain ATCC BAA-1098 / SB2B)).